The primary structure comprises 453 residues: Aminodeoxychorismate synthase component 1 (453 aa).

L-tryptophan is bound by residues serine 36, 43–46, and 240–242; these read YSRF and PFS. Glutamate 258 acts as the Proton donor in catalysis. Lysine 274 acts as the N6-(4-deoxychorismate)-lysine intermediate in catalysis.

Belongs to the anthranilate synthase component I family. Monomer. Heterodimer consisting of two non-identical subunits: a glutamine amidotransferase subunit (PabA) and a aminodeoxychorismate synthase subunit (PabB). Requires Mg(2+) as cofactor.

It carries out the reaction chorismate + L-glutamine = 4-amino-4-deoxychorismate + L-glutamate. It functions in the pathway cofactor biosynthesis; tetrahydrofolate biosynthesis; 4-aminobenzoate from chorismate: step 1/2. With respect to regulation, inhibited by 6-diazo-5-oxo-L-norleucine (DON). The inhibition is competitive with glutamine but uncompetitive with chorismate. Also inhibited by 2-fluorochorismate. In terms of biological role, part of a heterodimeric complex that catalyzes the two-step biosynthesis of 4-amino-4-deoxychorismate (ADC), a precursor of p-aminobenzoate (PABA) and tetrahydrofolate. In the first step, a glutamine amidotransferase (PabA) generates ammonia as a substrate that, along with chorismate, is used in the second step, catalyzed by aminodeoxychorismate synthase (PabB) to produce ADC. PabB, in the absence of PabA, can catalyze the formation of ADC in the presence of exogenous ammonia. The sequence is that of Aminodeoxychorismate synthase component 1 (pabB) from Escherichia coli (strain K12).